The following is a 196-amino-acid chain: dITP/XTP pyrophosphatase (196 aa).

10 to 15 (SGNKGK) serves as a coordination point for substrate. Mg(2+) contacts are provided by glutamate 40 and aspartate 69. Aspartate 69 acts as the Proton acceptor in catalysis. Substrate-binding positions include serine 70, 147-150 (FGYD), lysine 170, and 175-176 (HR).

The protein belongs to the HAM1 NTPase family. In terms of assembly, homodimer. Mg(2+) serves as cofactor.

The catalysed reaction is XTP + H2O = XMP + diphosphate + H(+). It carries out the reaction dITP + H2O = dIMP + diphosphate + H(+). It catalyses the reaction ITP + H2O = IMP + diphosphate + H(+). Its function is as follows. Pyrophosphatase that catalyzes the hydrolysis of nucleoside triphosphates to their monophosphate derivatives, with a high preference for the non-canonical purine nucleotides XTP (xanthosine triphosphate), dITP (deoxyinosine triphosphate) and ITP. Seems to function as a house-cleaning enzyme that removes non-canonical purine nucleotides from the nucleotide pool, thus preventing their incorporation into DNA/RNA and avoiding chromosomal lesions. The protein is dITP/XTP pyrophosphatase of Prochlorococcus marinus (strain NATL1A).